The following is a 469-amino-acid chain: Tetratricopeptide repeat protein 38 (469 aa).

The residue at position 2 (alanine 2) is an N-acetylalanine. Serine 5 carries the phosphoserine modification. 3 TPR repeats span residues 108–141 (REQLHVSAVETFAKGNFPKACELWEQILQDHPTD), 180–213 (SYVKGIYSFGLMETNFYDQAEKLAKEALSINPTD), and 252–285 (CHNYWHWALYLIEKGEYEAALTIYDTHILPSLQA).

It belongs to the TTC38 family.

The protein is Tetratricopeptide repeat protein 38 (TTC38) of Pongo abelii (Sumatran orangutan).